The sequence spans 374 residues: Putative F-box protein At3g16590 (374 aa).

Residues 1-45 (MPTKLPLELEDEILLRVPPLSLTRFRTVCKRWNTLFNDQRFINNH) enclose the F-box domain.

The sequence is that of Putative F-box protein At3g16590 from Arabidopsis thaliana (Mouse-ear cress).